We begin with the raw amino-acid sequence, 336 residues long: uncharacterized protein (336 aa).

This is an uncharacterized protein from Enterobacteria phage T4 (Bacteriophage T4).